The following is a 229-amino-acid chain: Flagellar L-ring protein (229 aa).

Residues 1–25 (MKQVRLPSSATVRAACAVAVAALAG) form the signal peptide. The N-palmitoyl cysteine moiety is linked to residue Cys26. Cys26 carries the S-diacylglycerol cysteine lipid modification.

The protein belongs to the FlgH family. The basal body constitutes a major portion of the flagellar organelle and consists of four rings (L,P,S, and M) mounted on a central rod.

The protein resides in the cell outer membrane. The protein localises to the bacterial flagellum basal body. Assembles around the rod to form the L-ring and probably protects the motor/basal body from shearing forces during rotation. This chain is Flagellar L-ring protein, found in Burkholderia orbicola (strain AU 1054).